The sequence spans 677 residues: Electrogenic aspartate/glutamate antiporter SLC25A12, mitochondrial (677 aa).

The residue at position 2 (Ala2) is an N-acetylalanine. The segment at 2–294 (AVKVHTTKRG…TLADIERIAP (293 aa)) is regulatory N-terminal domain. At 2-329 (AVKVHTTKRG…WLQIAESAYR (328 aa)) the chain is on the mitochondrial intermembrane side. 4 consecutive EF-hand domains span residues 40 to 85 (VQRY…SVLC), 86 to 121 (APDSMFIVAFQLFDKSGNGEVTFENVKEIFGQTIIH), 122 to 156 (HHIPFNWDCEFIRLHFGHNRKKHLNYVEFTQFLQE), and 157 to 192 (LQLEHARQAFALKDKSKSGMISGLDFSDVMVTIRSH). Residues Asp65, Thr67, Asp69, Leu71, and Glu76 each contribute to the Ca(2+) site. The interval 295–310 (LAEGALPYNLAELQRQ) is linker loop domain. A carrier domain region spans residues 320–612 (WLQIAESAYR…RWFYIDFGGL (293 aa)). Solcar repeat units lie at residues 324–416 (AESA…VRDK), 424–508 (IPLP…CKLL), and 516–604 (VGGI…LQRW). A helical membrane pass occupies residues 330–347 (FTLGSVAGAVGATAVYPI). At 348 to 390 (DLVKTRMQNQRGTGSVVGELMYKNSFDCFKKVLRYEGFFGLYR) the chain is on the mitochondrial matrix side. Residues 391–410 (GLIPQLIGVAPEKAIKLTVN) form a helical membrane-spanning segment. Over 411 to 433 (DFVRDKFTKRDGSIPLPAEILAG) the chain is Mitochondrial intermembrane. The helical transmembrane segment at 434-447 (GCAGGSQVIFTNPL) threads the bilayer. Topologically, residues 448 to 482 (EIVKIRLQVAGEITTGPRVSALNVLQDLGLFGLYK) are mitochondrial matrix. A helical membrane pass occupies residues 483-502 (GAKACFLRDIPFSAIYFPVY). Over 503–521 (AHCKLLLADENGRVGGINL) the chain is Mitochondrial intermembrane. The helical transmembrane segment at 522–539 (LTAGALAGVPAASLVTPA) threads the bilayer. The Mitochondrial matrix portion of the chain corresponds to 540–578 (DVIKTRLQVAARAGQTTYSGVVDCFRKILREEGPSAFWK). A helical membrane pass occupies residues 579-598 (GTAARVFRSSPQFGVTLVTY). Topologically, residues 599 to 677 (ELLQRWFYID…AQPKAAAAAQ (79 aa)) are mitochondrial intermembrane. A C-terminal domain region spans residues 613–677 (KPSGSEPTPK…AQPKAAAAAQ (65 aa)).

It belongs to the mitochondrial carrier (TC 2.A.29) family. In terms of assembly, homodimer (via N-terminus).

The protein localises to the mitochondrion inner membrane. It carries out the reaction L-aspartate(in) + L-glutamate(out) + H(+)(out) = L-aspartate(out) + L-glutamate(in) + H(+)(in). It catalyses the reaction 3-sulfino-L-alanine(out) + L-glutamate(in) + H(+)(in) = 3-sulfino-L-alanine(in) + L-glutamate(out) + H(+)(out). The catalysed reaction is 3-sulfino-L-alanine(out) + L-aspartate(in) = 3-sulfino-L-alanine(in) + L-aspartate(out). In terms of biological role, mitochondrial electrogenic aspartate/glutamate antiporter that favors efflux of aspartate and entry of glutamate and proton within the mitochondria as part of the malate-aspartate shuttle. Also mediates the uptake of L-cysteinesulfinate (3-sulfino-L-alanine) by mitochondria in exchange of L-glutamate and proton. Can also exchange L-cysteinesulfinate with aspartate in their anionic form without any proton translocation. Lacks transport activity towards L-glutamine or gamma-aminobutyric acid (GABA). This is Electrogenic aspartate/glutamate antiporter SLC25A12, mitochondrial from Mus musculus (Mouse).